Consider the following 512-residue polypeptide: Solute carrier family 40 member 2 (512 aa).

Residues 1-28 (MEEETETRVFLSNEQHQEEEEEEEEEPS) are disordered. Acidic residues predominate over residues 17 to 27 (QEEEEEEEEEP). Helical transmembrane passes span 55 to 75 (VALY…MYGV), 105 to 125 (LVTQ…LLVV), 133 to 153 (FPVF…GVLS), 187 to 207 (GIDL…ISFV), 214 to 234 (ITFA…FISV), 310 to 330 (IVLP…FGTL), 343 to 363 (YIIG…TVLY), 376 to 396 (GVWS…SIWV), 405 to 425 (MLMA…LAVI), 442 to 462 (GVQN…GIIV), and 468 to 488 (FWML…LYTI).

The protein belongs to the ferroportin (FP) (TC 2.A.100) family. SLC40A subfamily.

It is found in the vacuole membrane. Functionally, vacuolar transporter that is involved in the transport of excess nickel into the vacuole under iron deficiency, increasing cellular tolerance to nickel under iron deficiency stress response. The polypeptide is Solute carrier family 40 member 2 (IREG2) (Arabidopsis thaliana (Mouse-ear cress)).